The chain runs to 74 residues: RNA-binding protein Hfq (74 aa).

One can recognise a Sm domain in the interval 9–69; sequence DQFLNQLRKE…ISTFVPQKNV (61 aa).

It belongs to the Hfq family. As to quaternary structure, homohexamer.

In terms of biological role, RNA chaperone that binds small regulatory RNA (sRNAs) and mRNAs to facilitate mRNA translational regulation in response to envelope stress, environmental stress and changes in metabolite concentrations. Also binds with high specificity to tRNAs. The polypeptide is RNA-binding protein Hfq (Bacillus cereus (strain Q1)).